We begin with the raw amino-acid sequence, 31 residues long: Photosystem II reaction center protein T (31 aa).

A helical membrane pass occupies residues 3–23 (ALVYTFLLVGTLGIIFFSIFF).

The protein belongs to the PsbT family. PSII is composed of 1 copy each of membrane proteins PsbA, PsbB, PsbC, PsbD, PsbE, PsbF, PsbH, PsbI, PsbJ, PsbK, PsbL, PsbM, PsbT, PsbY, PsbZ, Psb30/Ycf12, at least 3 peripheral proteins of the oxygen-evolving complex and a large number of cofactors. It forms dimeric complexes.

The protein resides in the plastid. The protein localises to the chloroplast thylakoid membrane. In terms of biological role, found at the monomer-monomer interface of the photosystem II (PS II) dimer, plays a role in assembly and dimerization of PSII. PSII is a light-driven water plastoquinone oxidoreductase, using light energy to abstract electrons from H(2)O, generating a proton gradient subsequently used for ATP formation. This chain is Photosystem II reaction center protein T, found in Bigelowiella natans (Pedinomonas minutissima).